The primary structure comprises 205 residues: Glycerol-3-phosphate acyltransferase (205 aa).

Residues 1 to 3 lie on the Periplasmic side of the membrane; the sequence is MSA. The helical transmembrane segment at 4-24 threads the bilayer; it reads IAPGMILFAYLCGSISSAILV. Topologically, residues 25-52 are cytoplasmic; that stretch reads CRIAGLPDPRESGSGNPGATNVLRIGGK. A helical membrane pass occupies residues 53 to 73; sequence GAAVAVLIFDILKGMLPVWGA. The Periplasmic segment spans residues 74–80; sequence YALGVTP. Residues 81–101 form a helical membrane-spanning segment; it reads FWLGLIAIAACLGHIWPVFFG. Residues 102–111 lie on the Cytoplasmic side of the membrane; that stretch reads FKGGKGVATA. The helical transmembrane segment at 112–132 threads the bilayer; it reads FGAIAPIGWDLTGVMAGTWLL. The Periplasmic segment spans residues 133-137; the sequence is TVLLS. The helical transmembrane segment at 138–158 threads the bilayer; the sequence is GYSSLGAIVSALIAPFYVWWF. Over 159–205 the chain is Cytoplasmic; that stretch reads KPQFTFPVSMLSCLILLRHHDNIQRLWRRQETKIWTKLKKKRQKDSE.

The protein belongs to the PlsY family. In terms of assembly, probably interacts with PlsX.

The protein resides in the cell inner membrane. It catalyses the reaction sn-glycerol 3-phosphate + an acyl-CoA = a 1-acyl-sn-glycero-3-phosphate + CoA. The enzyme catalyses a fatty acyl-[ACP] + sn-glycerol 3-phosphate = a 1-acyl-sn-glycero-3-phosphate + holo-[ACP]. It participates in lipid metabolism; phospholipid metabolism. Its function is as follows. Catalyzes the transfer of an acyl group from acyl-ACP to glycerol-3-phosphate (G3P) to form lysophosphatidic acid (LPA). This enzyme can also utilize acyl-CoA as fatty acyl donor, but not acyl-PO(4). The chain is Glycerol-3-phosphate acyltransferase from Salmonella schwarzengrund (strain CVM19633).